The sequence spans 643 residues: MRPLVCVFTMFLLALLSSNTESVAVMSVDMGSEWMKIAIVKPGVPMEIVLNKESRRKTPVAIALKENERLFGDSALGMAVKNPKVTFRYFQDLLGKRADNPHVKAFEARFPEYQLVKDEHRETVLFKLSEELTYSPEELLGMMLNYSRSLAEEFAEQPVKDVVITVPAFFNQAERRAVLQAAQLSDLKVLQLINDNTAVALNYGVFRRKDINATAQNIMFYEMGSRSTICTIVTYQSVKTKDSGMQPQLQIRGVGFDRTLGGIEMDLRLRDHLAKLFNEQKKSKKDVRENQRAMSKLLKEANRVKTILSANNDHMAQIEGLMDDIDFKAKVTRQELEDLCADLFNRVSAPVQHALSSAEMKMEEIDQVILVGGATRVPKVQELLLKVVGKEELGKNINADEAAAMGAVYQAAALSKAFKVKPFIVRDAAIFPIQVEFTREVEEEDHSKSLKHNKRILFQRLAPYPQRKVITFNRYTDNFAFSINYGDLSYLGPDDLKVFGSLNLTTVKLNGVGESFQKRSDYESKGIKAHFNMDESGLLTLDRVEAVFETVVDEKPEQESTLTKLGNTISSLFGGGSSVPETKENATDSVQEEDEVPTEPTKEEEQESADAADKQKDKEKGTTATNEEEEGKKEEEKSEPQEE.

Positions 1 to 22 are cleaved as a signal peptide; the sequence is MRPLVCVFTMFLLALLSSNTES. The tract at residues 565–643 is disordered; it reads LGNTISSLFG…EEEKSEPQEE (79 aa). Positions 590–610 are enriched in acidic residues; the sequence is VQEEDEVPTEPTKEEEQESAD. 2 stretches are compositionally biased toward basic and acidic residues: residues 611 to 621 and 630 to 643; these read AADKQKDKEKG and EGKKEEEKSEPQEE.

Belongs to the heat shock protein 70 family.

The protein resides in the endoplasmic reticulum lumen. Has a pivotal role in cytoprotective cellular mechanisms triggered by oxygen deprivation. May play a role as a molecular chaperone and participate in protein folding. This chain is Hypoxia up-regulated protein 1 (hyou1), found in Xenopus tropicalis (Western clawed frog).